Reading from the N-terminus, the 185-residue chain is Large ribosomal subunit protein uL22 (185 aa).

Residues 160–185 (VSHDDSQKKKVSKKKLARQKEKMMRE) form a disordered region.

The protein belongs to the universal ribosomal protein uL22 family.

This chain is Large ribosomal subunit protein uL22 (RpL17), found in Maconellicoccus hirsutus (Pink hibiscus mealybug).